The primary structure comprises 1334 residues: Aldehyde oxidase 4 (1334 aa).

Positions 6–93 (DELIFFVNGK…GAAVTTVEGV (88 aa)) constitute a 2Fe-2S ferredoxin-type domain. The [2Fe-2S] cluster site is built by C45, C50, C53, and C75. Q114 is a binding site for Mo-molybdopterin. Positions 115, 118, 150, and 152 each coordinate [2Fe-2S] cluster. C152 contributes to the Mo-molybdopterin binding site. Residues 235-421 (FQGERTIWIM…LSVFIPYSGQ (187 aa)) form the FAD-binding PCMH-type domain. Residues 263-270 (LVMGNTAV), A345, T354, H358, D367, and A411 each bind FAD. Mo-molybdopterin contacts are provided by residues A802, 802-803 (AF), L1043, 1084-1087 (GSMG), Q1199, and L1263. The active-site Proton acceptor; for azaheterocycle hydroxylase activity is E1265.

It belongs to the xanthine dehydrogenase family. As to quaternary structure, homodimer. It depends on [2Fe-2S] cluster as a cofactor. Requires FAD as cofactor. Mo-molybdopterin serves as cofactor.

It localises to the cytoplasm. It catalyses the reaction an aldehyde + O2 + H2O = a carboxylate + H2O2 + H(+). The enzyme catalyses retinal + O2 + H2O = retinoate + H2O2 + H(+). In terms of biological role, aldehyde oxidase able to catalyze the oxidation of retinaldehyde into retinoate. Acts as a negative modulator of the epidermal trophism. May be able to oxidize a wide variety of aldehydes into their corresponding carboxylates and to hydroxylate azaheterocycles. This is Aldehyde oxidase 4 (Aox4) from Rattus norvegicus (Rat).